The primary structure comprises 214 residues: Ribosomal RNA small subunit methyltransferase G (214 aa).

Residues Gly-77, Phe-82, 128–129 (VE), and Arg-143 contribute to the S-adenosyl-L-methionine site.

Belongs to the methyltransferase superfamily. RNA methyltransferase RsmG family.

The protein localises to the cytoplasm. It catalyses the reaction guanosine(527) in 16S rRNA + S-adenosyl-L-methionine = N(7)-methylguanosine(527) in 16S rRNA + S-adenosyl-L-homocysteine. Specifically methylates the N7 position of guanine in position 527 of 16S rRNA. This is Ribosomal RNA small subunit methyltransferase G from Nitrosomonas europaea (strain ATCC 19718 / CIP 103999 / KCTC 2705 / NBRC 14298).